The following is a 293-amino-acid chain: Ribosomal RNA small subunit methyltransferase A (293 aa).

S-adenosyl-L-methionine-binding residues include Asn38, Val40, Gly65, Glu86, Asp116, and Asn133.

Belongs to the class I-like SAM-binding methyltransferase superfamily. rRNA adenine N(6)-methyltransferase family. RsmA subfamily.

It is found in the cytoplasm. The catalysed reaction is adenosine(1518)/adenosine(1519) in 16S rRNA + 4 S-adenosyl-L-methionine = N(6)-dimethyladenosine(1518)/N(6)-dimethyladenosine(1519) in 16S rRNA + 4 S-adenosyl-L-homocysteine + 4 H(+). Its function is as follows. Specifically dimethylates two adjacent adenosines (A1518 and A1519) in the loop of a conserved hairpin near the 3'-end of 16S rRNA in the 30S particle. May play a critical role in biogenesis of 30S subunits. This chain is Ribosomal RNA small subunit methyltransferase A, found in Paenarthrobacter aurescens (strain TC1).